The following is a 373-amino-acid chain: DNA dC-&gt;dU-editing enzyme APOBEC-3F (373 aa).

2 consecutive CMP/dCMP-type deaminase domains span residues 29–137 (RRNT…LCRL) and 174–321 (DDNY…LRSL). A (Microbial infection) Glycyl lysine isopeptide (Lys-Gly) (interchain with G-Cter in ubiquitin) cross-link involves residue Lys-52. Residues His-65, Cys-96, and Cys-99 each coordinate Zn(2+). A (Microbial infection) Glycyl lysine isopeptide (Lys-Gly) (interchain with G-Cter in ubiquitin) cross-link involves residue Lys-234. His-249 is a Zn(2+) binding site. Glu-251 acts as the Proton donor in catalysis. 2 residues coordinate Zn(2+): Cys-280 and Cys-283. Residues Cys-280 and Cys-283 are joined by a disulfide bond. (Microbial infection) Glycyl lysine isopeptide (Lys-Gly) (interchain with G-Cter in ubiquitin) cross-links involve residues Lys-334, Lys-352, Lys-355, and Lys-358.

Belongs to the cytidine and deoxycytidylate deaminase family. As to quaternary structure, homodimer. Interacts with APOBEC3G in an RNA-dependent manner. Interacts with AGO1, AGO2 and AGO3. In terms of assembly, (Microbial infection) Interacts with HIV-1 Vif, leading to its ubiquitination and degradation by the proteasome. In the absence of Vif protein, specifically packaged into HIV-1 virions. The cofactor is Zn(2+). In terms of processing, (Microbial infection) Following infection by HIV-1, ubiquitinated by a cullin-5-RING E3 ubiquitin-protein ligase complex (ECS complex) hijacked by the HIV-1 Vif protein, leading to its degradation. Widely expressed. Highly expressed in ovary.

It localises to the cytoplasm. The protein resides in the P-body. The catalysed reaction is a 2'-deoxycytidine in single-stranded DNA + H2O + H(+) = a 2'-deoxyuridine in single-stranded DNA + NH4(+). (Microbial infection) Antiviral activity is neutralized by the HIV-1 virion infectivity factor (Vif), that prevents its incorporation into progeny virions by both inhibiting its translation and/or by inducing its ubiquitination and subsequent degradation by the 26S proteasome. DNA deaminase (cytidine deaminase) which acts as an inhibitor of retrovirus replication and retrotransposon mobility via deaminase-dependent and -independent mechanisms. Exhibits antiviral activity against viruse such as HIV-1 or HIV-2. After the penetration of retroviral nucleocapsids into target cells of infection and the initiation of reverse transcription, it can induce the conversion of cytosine to uracil in the minus-sense single-strand viral DNA, leading to G-to-A hypermutations in the subsequent plus-strand viral DNA. The resultant detrimental levels of mutations in the proviral genome, along with a deamination-independent mechanism that works prior to the proviral integration, together exert efficient antiretroviral effects in infected target cells. Selectively targets single-stranded DNA and does not deaminate double-stranded DNA or single- or double-stranded RNA. Exhibits antiviral activity also against hepatitis B virus (HBV), equine infectious anemia virus (EIAV), xenotropic MuLV-related virus (XMRV) and simian foamy virus (SFV) and may inhibit the mobility of LTR and non-LTR retrotransposons. May also play a role in the epigenetic regulation of gene expression through the process of active DNA demethylation. The protein is DNA dC-&gt;dU-editing enzyme APOBEC-3F of Homo sapiens (Human).